A 257-amino-acid chain; its full sequence is Transmembrane protein 101 (257 aa).

The next 8 helical transmembrane spans lie at 21-40 (VLLT…LYAE), 52-72 (VPYL…MSFG), 77-97 (WFAL…YVGG), 110-130 (YSRT…AGEL), 139-159 (SLQS…AYSL), 182-202 (LFFV…YVTL), 206-226 (ILAV…AYWH), and 233-253 (FWNQ…AVIL).

It is found in the membrane. Functionally, may activate NF-kappa-B signaling pathways. In Bos taurus (Bovine), this protein is Transmembrane protein 101 (TMEM101).